The chain runs to 301 residues: Ornithine carbamoyltransferase (301 aa).

Carbamoyl phosphate is bound by residues 53 to 56 (STRT), Gln80, Arg104, and 131 to 134 (HPCQ). Residues Asn162, Asp221, and 225–226 (SI) contribute to the L-ornithine site. Carbamoyl phosphate contacts are provided by residues 260–261 (CL) and Arg288.

It belongs to the aspartate/ornithine carbamoyltransferase superfamily. OTCase family.

The protein localises to the cytoplasm. It carries out the reaction carbamoyl phosphate + L-ornithine = L-citrulline + phosphate + H(+). It participates in amino-acid biosynthesis; L-arginine biosynthesis; L-arginine from L-ornithine and carbamoyl phosphate: step 1/3. Its function is as follows. Reversibly catalyzes the transfer of the carbamoyl group from carbamoyl phosphate (CP) to the N(epsilon) atom of ornithine (ORN) to produce L-citrulline. This chain is Ornithine carbamoyltransferase, found in Cenarchaeum symbiosum (strain A).